A 101-amino-acid chain; its full sequence is uncharacterized protein (101 aa).

Residues 13–33 (FISIMCLFSIPLCFSLSIFFF) traverse the membrane as a helical segment.

The protein localises to the membrane. This is an uncharacterized protein from Schizosaccharomyces pombe (strain 972 / ATCC 24843) (Fission yeast).